Reading from the N-terminus, the 662-residue chain is ABC transporter G family member 25 (662 aa).

The interval 1-30 (MSAFDGVENQMNGPDSSPRLSQDPREPRSL) is disordered. Positions 9 to 20 (NQMNGPDSSPRL) are enriched in polar residues. A glycan (N-linked (GlcNAc...) asparagine) is linked at Asn56. The ABC transporter domain maps to 69-308 (QKPSDETRST…FESVGFSPAF (240 aa)). 101–108 (GPSGSGKS) contributes to the ATP binding site. The N-linked (GlcNAc...) asparagine glycan is linked to Asn122. Transmembrane regions (helical) follow at residues 374 to 394 (VNGG…CILL), 406 to 426 (FDLL…LMWW), 437 to 457 (LGLL…NAVF), 489 to 509 (LSME…MVYL), 522 to 542 (VLLL…AAIM), 547 to 567 (ASTI…YYVN), and 629 to 649 (VIGD…FFGY). An ABC transmembrane type-2 domain is found at 388–594 (SQLCILLHRL…CYRLLVAIQY (207 aa)).

Belongs to the ABC transporter superfamily. ABCG family. Eye pigment precursor importer (TC 3.A.1.204) subfamily. Mainly expressed in vascular tissues,predominantly in phloem companion cells, with highest levels in roots and seeds, and lower levels in seedlings, stems, leaves and flowers. Mostly observed in inflorescence meristems relative to cauline leaves and developing siliques. In seeds, mainly expressed in the endosperm and, to a lesser extent, in the embryo.

The protein localises to the cell membrane. It carries out the reaction abscisate(in) + ATP + H2O = abscisate(out) + ADP + phosphate + H(+). Its activity is regulated as follows. ADP and vanadate (ABC transporters inhibitor) inhibit the ATP-dependent abscisic acid (ABA) uptake. High affinity abscisic acid (ABA) transporter that mediates the export of ABA, with a preference for (+)-ABA, through the plasma membrane, especially in vascular tissues (e.g. phloem companion cells), and is involved in the intercellular ABA signaling pathway. Together with ABCG31, export ABA from the endosperm to deliver it to the embryo via ABCG30 and ABCG40-mediated import to suppress radicle extension and subsequent embryonic growth. The chain is ABC transporter G family member 25 from Arabidopsis thaliana (Mouse-ear cress).